The primary structure comprises 338 residues: Anthranilate phosphoribosyltransferase (338 aa).

5-phospho-alpha-D-ribose 1-diphosphate is bound by residues Gly-80, 83–84, Thr-88, 90–93, 108–116, and Ser-120; these read GD, NIST, and KHGNRAMSS. Position 80 (Gly-80) interacts with anthranilate. Ser-92 serves as a coordination point for Mg(2+). Residue Asn-111 coordinates anthranilate. Residue Arg-166 participates in anthranilate binding. Residues Asp-225 and Glu-226 each coordinate Mg(2+).

The protein belongs to the anthranilate phosphoribosyltransferase family. Homodimer. Requires Mg(2+) as cofactor.

It catalyses the reaction N-(5-phospho-beta-D-ribosyl)anthranilate + diphosphate = 5-phospho-alpha-D-ribose 1-diphosphate + anthranilate. Its pathway is amino-acid biosynthesis; L-tryptophan biosynthesis; L-tryptophan from chorismate: step 2/5. Functionally, catalyzes the transfer of the phosphoribosyl group of 5-phosphorylribose-1-pyrophosphate (PRPP) to anthranilate to yield N-(5'-phosphoribosyl)-anthranilate (PRA). The chain is Anthranilate phosphoribosyltransferase from Herpetosiphon aurantiacus (strain ATCC 23779 / DSM 785 / 114-95).